Consider the following 357-residue polypeptide: Adenylate isopentenyltransferase 1, chloroplastic (357 aa).

The transit peptide at 1–71 (MTELNFHLLP…NRKDKVVVIL (71 aa)) directs the protein to the chloroplast. A compositionally biased stretch (low complexity) spans 20–39 (TTTSPSFSSHSSSSSSLLSF). The tract at residues 20-58 (TTTSPSFSSHSSSSSSLLSFTKRRRKHQPLVSSIRMEQS) is disordered. 72–79 (GATGAGKS) lines the ATP pocket.

Belongs to the IPP transferase family. As to expression, expressed in the vascular stele of the roots, in the xylem precursor cell files in the root tip, in leaf axils, ovules, and immature seeds.

The protein resides in the plastid. It localises to the chloroplast. It carries out the reaction dimethylallyl diphosphate + AMP = N(6)-(dimethylallyl)adenosine 5'-phosphate + diphosphate. The enzyme catalyses dimethylallyl diphosphate + ADP = N(6)-(dimethylallyl)adenosine 5'-diphosphate + diphosphate. The catalysed reaction is dimethylallyl diphosphate + ATP = N(6)-(dimethylallyl)adenosine 5'-triphosphate + diphosphate. Involved in cytokinin biosynthesis. Catalyzes the transfer of an isopentenyl group from dimethylallyl diphosphate (DMAPP) to ATP, ADP and AMP. Adenine, adenosine, isopentenylpyrophosphate and 1-hydroxy-2-methyl-2-(E)-butenyl 4-diphosphate (HMBDP) are not used as substrates. This is Adenylate isopentenyltransferase 1, chloroplastic (IPT1) from Arabidopsis thaliana (Mouse-ear cress).